A 330-amino-acid chain; its full sequence is Complement factor H-related protein 1 (330 aa).

The N-terminal stretch at Met-1–Gly-18 is a signal peptide. Sushi domains are found at residues Phe-22 to Leu-84, Arg-85 to Ser-142, Thr-145 to Asp-203, Gly-206 to His-264, and Met-273 to Lys-329. Disulfide bonds link Cys-23/Cys-72, Cys-55/Cys-83, Cys-87/Cys-129, Cys-114/Cys-140, Cys-147/Cys-190, Cys-176/Cys-201, Cys-208/Cys-251, Cys-237/Cys-262, Cys-266/Cys-317, and Cys-300/Cys-327. An N-linked (GlcNAc...) asparagine glycan is attached at Asn-126. Asn-194 is a glycosylation site (N-linked (GlcNAc...) asparagine).

In terms of assembly, head-to-tail homodimer and heterodimer with CFHR2 or CFHR5. (Microbial infection) Interacts with C.albicans GPD2; the interaction is direct and leads to the degradation of C3. N-glycosylated. Two forms are observed; one with a single side chain and the other with two. As to expression, expressed by the liver and secreted in plasma.

It is found in the secreted. Its function is as follows. Involved in complement regulation. The dimerized forms have avidity for tissue-bound complement fragments and efficiently compete with the physiological complement inhibitor CFH. Can associate with lipoproteins and may play a role in lipid metabolism. This chain is Complement factor H-related protein 1 (CFHR1), found in Homo sapiens (Human).